The chain runs to 363 residues: MSEVPQSTSDVHPDAECHLSRYTTLRLGGWATRVVTATSADDLVRGVREAGDRGERILVLAGGSNVVIGDAGFPGTVVLVRSRGLKVIETDTDTVTVRVEAGEPWDELVAHTVANEWSGLECLSGIPGSTGATPIQNVGAYGQEVAETITGVQVYDRVTGTTARIEARDCGFSYRSSIFKRSDRWVVLSVDFRLARSPLSGPVRYAELARALDVAVGDRVPLAKARAAVLRLRAGKGMVLDAADPDTWSVGSFFTNPVLDRAGYERLRERAADVGEPPSWPGTDGTVKVSAAWLIDKSGFGKGHPGPAGVVTISTKHTLALTHRSGTARTEDLVRLAREIRRGVQARFGVTLHPEPVLVNCAL.

One can recognise an FAD-binding PCMH-type domain in the interval 27–197; sequence LGGWATRVVT…LSVDFRLARS (171 aa). Residue Arg175 is part of the active site. Ser252 acts as the Proton donor in catalysis. Residue Glu355 is part of the active site.

This sequence belongs to the MurB family. Requires FAD as cofactor.

Its subcellular location is the cytoplasm. It carries out the reaction UDP-N-acetyl-alpha-D-muramate + NADP(+) = UDP-N-acetyl-3-O-(1-carboxyvinyl)-alpha-D-glucosamine + NADPH + H(+). The protein operates within cell wall biogenesis; peptidoglycan biosynthesis. In terms of biological role, cell wall formation. This Salinispora arenicola (strain CNS-205) protein is UDP-N-acetylenolpyruvoylglucosamine reductase.